The primary structure comprises 212 residues: Translation initiation factor IF-3 (212 aa).

Residues 190 to 203 show a composition bias toward basic and acidic residues; it reads LVDKNSDSQDKSVS. Residues 190–212 form a disordered region; it reads LVDKNSDSQDKSVSEEDTNEGEQ.

The protein belongs to the IF-3 family. Monomer.

It localises to the cytoplasm. In terms of biological role, IF-3 binds to the 30S ribosomal subunit and shifts the equilibrium between 70S ribosomes and their 50S and 30S subunits in favor of the free subunits, thus enhancing the availability of 30S subunits on which protein synthesis initiation begins. In Mycoplasmopsis fermentans (Mycoplasma fermentans), this protein is Translation initiation factor IF-3.